A 172-amino-acid chain; its full sequence is Shikimate kinase (172 aa).

14–19 is an ATP binding site; the sequence is GAGKST. Ser-18 is a Mg(2+) binding site. Substrate-binding residues include Asp-36, Arg-60, and Gly-82. ATP is bound at residue Arg-120. Arg-139 is a substrate binding site. Gln-156 contributes to the ATP binding site.

It belongs to the shikimate kinase family. In terms of assembly, monomer. It depends on Mg(2+) as a cofactor.

The protein resides in the cytoplasm. It carries out the reaction shikimate + ATP = 3-phosphoshikimate + ADP + H(+). Its pathway is metabolic intermediate biosynthesis; chorismate biosynthesis; chorismate from D-erythrose 4-phosphate and phosphoenolpyruvate: step 5/7. Functionally, catalyzes the specific phosphorylation of the 3-hydroxyl group of shikimic acid using ATP as a cosubstrate. In Vibrio campbellii (strain ATCC BAA-1116), this protein is Shikimate kinase.